The following is a 389-amino-acid chain: Phospho-N-acetylmuramoyl-pentapeptide-transferase (389 aa).

10 helical membrane passes run 25-45, 73-93, 97-117, 135-155, 190-210, 222-242, 258-278, 286-306, 311-331, and 366-386; these read RAVM…PWVI, TMGG…WGDL, FIWI…VDDY, FWQS…VSEA, ISYP…IVGA, GLVI…AYVM, GAGE…AFLW, VFMG…VAVI, IVLF…MLQV, and QVVV…LSTL.

Belongs to the glycosyltransferase 4 family. MraY subfamily. Mg(2+) serves as cofactor.

It is found in the cell inner membrane. It catalyses the reaction UDP-N-acetyl-alpha-D-muramoyl-L-alanyl-gamma-D-glutamyl-meso-2,6-diaminopimeloyl-D-alanyl-D-alanine + di-trans,octa-cis-undecaprenyl phosphate = di-trans,octa-cis-undecaprenyl diphospho-N-acetyl-alpha-D-muramoyl-L-alanyl-D-glutamyl-meso-2,6-diaminopimeloyl-D-alanyl-D-alanine + UMP. Its pathway is cell wall biogenesis; peptidoglycan biosynthesis. Catalyzes the initial step of the lipid cycle reactions in the biosynthesis of the cell wall peptidoglycan: transfers peptidoglycan precursor phospho-MurNAc-pentapeptide from UDP-MurNAc-pentapeptide onto the lipid carrier undecaprenyl phosphate, yielding undecaprenyl-pyrophosphoryl-MurNAc-pentapeptide, known as lipid I. The protein is Phospho-N-acetylmuramoyl-pentapeptide-transferase of Burkholderia multivorans (strain ATCC 17616 / 249).